We begin with the raw amino-acid sequence, 176 residues long: Shikimate kinase (176 aa).

14–19 (GAGKST) contacts ATP. Mg(2+) is bound at residue Ser-18. Substrate is bound by residues Asp-36, Arg-60, and Gly-83. ATP is bound at residue Arg-121. Position 140 (Arg-140) interacts with substrate.

Belongs to the shikimate kinase family. In terms of assembly, monomer. Mg(2+) serves as cofactor.

Its subcellular location is the cytoplasm. The enzyme catalyses shikimate + ATP = 3-phosphoshikimate + ADP + H(+). It participates in metabolic intermediate biosynthesis; chorismate biosynthesis; chorismate from D-erythrose 4-phosphate and phosphoenolpyruvate: step 5/7. Functionally, catalyzes the specific phosphorylation of the 3-hydroxyl group of shikimic acid using ATP as a cosubstrate. The chain is Shikimate kinase from Francisella tularensis subsp. holarctica (strain FTNF002-00 / FTA).